The sequence spans 377 residues: MADFLPSRSVLSVCFPGCLLTSGEAEQQRKSKEIDKCLSREKTYVKRLVKILLLGAGESGKSTFLKQMRIIHGQDFDQRAREEFRPTIYSNVIKGMRVLVDAREKLHIPWGDNSNQQHGDKMMSFDTRAPMAAQGMVETRVFLQYLPAIRALWADSGIQNAYDRRREFQLGESVKYFLDNLDKLGEPDYIPSQQDILLARRPTKGIHEYDFEIKNVPFKMVDVGGQRSERKRWFECFDSVTSILFLVSSSEFDQVLMEDRLTNRLTESLNIFETIVNNRVFSNVSIILFLNKTDLLEEKVQIVSIKDYFLEFEGDPHCLRDVQKFLVECFRNKRRDQQQKPLYHHFTTAINTENIRLVFRDVKDTILHDNLKQLMLQ.

S-palmitoyl cysteine attachment occurs at residues Cys-14 and Cys-18. Residues 47-377 (RLVKILLLGA…HDNLKQLMLQ (331 aa)) enclose the G-alpha domain. The interval 50-63 (KILLLGAGESGKST) is G1 motif. GTP-binding positions include 58–63 (ESGKST), Ser-173, and 197–200 (LLAR). A Mg(2+)-binding site is contributed by Ser-62. The tract at residues 195–203 (DILLARRPT) is G2 motif. A Mg(2+)-binding site is contributed by Thr-203. A Phosphothreonine; by PKA modification is found at Thr-203. Residues 218-227 (FKMVDVGGQR) form a G3 motif region. The segment at 287–294 (ILFLNKTD) is G4 motif. Residues 291–294 (NKTD) and Ala-349 each bind GTP. The G5 motif stretch occupies residues 347–352 (TTAINT).

The protein belongs to the G-alpha family. G(12) subfamily. G proteins are composed of 3 units; alpha, beta and gamma. The alpha chain contains the guanine nucleotide binding site. Interacts with UBXD5. Interacts with HAX1. Interacts (in GTP-bound form) with PPP5C (via TPR repeats); activates PPP5C phosphatase activity and translocates PPP5C to the cell membrane. Interacts with RGS22. Interacts (in GTP-bound form) with ARHGEF1. Interacts (in GTP-bound form) with ARHGEF11 (via RGS domain). Interacts (in GTP-bound form) with ARHGEF12 (via RGS domain). Interacts with CTNND1. Interacts with GASL2L2. Interacts with GPR35. Interacts with GPR174. In terms of processing, palmitoylation is critical for proper membrane localization and signaling. Phosphorylation on Thr-203 by PKA destabilizes the heterotrimer of alpha, beta and gamma, and inhibits Rho activation. Expressed in testis, including in Leydig cells and in the seminiferous epithelium, in differentiating cells from the spermatogonia to mature spermatozoa stages and round spermatids (at protein level). Expressed in 99.2% of spermatozoa from healthy individuals, but only in 28.6% of macrocephalic spermatozoa from infertile patients (at protein level).

Its subcellular location is the cell membrane. The protein localises to the melanosome. It is found in the cytoplasm. It localises to the nucleus. Guanine nucleotide-binding proteins (G proteins) are involved as modulators or transducers in various transmembrane signaling systems. Activates effector molecule RhoA by binding and activating RhoGEFs (ARHGEF1/p115RhoGEF, ARHGEF11/PDZ-RhoGEF and ARHGEF12/LARG). GNA13-dependent Rho signaling subsequently regulates transcription factor AP-1 (activating protein-1). Promotes tumor cell invasion and metastasis by activating RhoA/ROCK signaling pathway. Inhibits CDH1-mediated cell adhesion in a process independent from Rho activation. In lymphoid follicles, transmits P2RY8- and S1PR2-dependent signals that lead to inhibition of germinal center (GC) B cell growth and migration outside the GC niche. This Homo sapiens (Human) protein is Guanine nucleotide-binding protein subunit alpha-13 (GNA13).